We begin with the raw amino-acid sequence, 163 residues long: Nucleotide-binding protein GWCH70_0711 (163 aa).

This sequence belongs to the YajQ family.

In terms of biological role, nucleotide-binding protein. The chain is Nucleotide-binding protein GWCH70_0711 from Geobacillus sp. (strain WCH70).